We begin with the raw amino-acid sequence, 503 residues long: ATP synthase subunit beta (503 aa).

157-164 (GGAGVGKT) contacts ATP.

Belongs to the ATPase alpha/beta chains family. As to quaternary structure, F-type ATPases have 2 components, CF(1) - the catalytic core - and CF(0) - the membrane proton channel. CF(1) has five subunits: alpha(3), beta(3), gamma(1), delta(1), epsilon(1). CF(0) has three main subunits: a(1), b(2) and c(9-12). The alpha and beta chains form an alternating ring which encloses part of the gamma chain. CF(1) is attached to CF(0) by a central stalk formed by the gamma and epsilon chains, while a peripheral stalk is formed by the delta and b chains.

The protein localises to the cell inner membrane. It catalyses the reaction ATP + H2O + 4 H(+)(in) = ADP + phosphate + 5 H(+)(out). Functionally, produces ATP from ADP in the presence of a proton gradient across the membrane. The catalytic sites are hosted primarily by the beta subunits. The protein is ATP synthase subunit beta of Flavobacterium johnsoniae (strain ATCC 17061 / DSM 2064 / JCM 8514 / BCRC 14874 / CCUG 350202 / NBRC 14942 / NCIMB 11054 / UW101) (Cytophaga johnsonae).